An 85-amino-acid chain; its full sequence is Small ribosomal subunit protein uS17 (85 aa).

It belongs to the universal ribosomal protein uS17 family. Part of the 30S ribosomal subunit.

Functionally, one of the primary rRNA binding proteins, it binds specifically to the 5'-end of 16S ribosomal RNA. The protein is Small ribosomal subunit protein uS17 of Desulforapulum autotrophicum (strain ATCC 43914 / DSM 3382 / VKM B-1955 / HRM2) (Desulfobacterium autotrophicum).